The primary structure comprises 299 residues: uncharacterized protein (299 aa).

8 helical membrane-spanning segments follow: residues 13–33, 36–56, 79–99, 112–132, 151–171, 201–221, 241–261, and 267–287; these read ILFL…LHFM, AFVI…FLML, SFGI…VIII, TAIG…ISVI, ITSE…LFFI, FLIL…VILV, YVIL…MLLS, and PPGP…FLII.

This sequence belongs to the ABC-3 integral membrane protein family.

It localises to the plastid. Its subcellular location is the cyanelle membrane. This is an uncharacterized protein from Cyanophora paradoxa.